The primary structure comprises 162 residues: Transmembrane protein 92 (162 aa).

A signal peptide spans 1-22 (MLDTWVWGTLTLTFGLLSSLQG). Over 23–63 (VSFNETANTCDILNCPKGFTCCVKECCPERKVWDPANDRFR) the chain is Extracellular. The chain crosses the membrane as a helical span at residues 64–84 (FLVILACIIFPILFICALVSL). At 85–162 (FCPNCTELQH…QMRGRAYATL (78 aa)) the chain is on the cytoplasmic side. The disordered stretch occupies residues 134-162 (TPPTEPPPPYSLRPEGPAGQMRGRAYATL).

It localises to the membrane. The protein is Transmembrane protein 92 (Tmem92) of Mus musculus (Mouse).